The primary structure comprises 469 residues: Adenosylhomocysteinase (469 aa).

Residues T63, D139, and E164 each contribute to the substrate site. Residue 165-167 participates in NAD(+) binding; sequence TTT. Residues K194 and D198 each contribute to the substrate site. NAD(+)-binding positions include N199, 228–233, E251, N300, 321–323, and N375; these read GYGDVG and IGH.

It belongs to the adenosylhomocysteinase family. NAD(+) is required as a cofactor.

The protein resides in the cytoplasm. The catalysed reaction is S-adenosyl-L-homocysteine + H2O = L-homocysteine + adenosine. It participates in amino-acid biosynthesis; L-homocysteine biosynthesis; L-homocysteine from S-adenosyl-L-homocysteine: step 1/1. Its function is as follows. May play a key role in the regulation of the intracellular concentration of adenosylhomocysteine. This is Adenosylhomocysteinase from Pseudomonas fluorescens (strain Pf0-1).